Here is a 348-residue protein sequence, read N- to C-terminus: Protein RecA (348 aa).

Residue 66–73 (GPESSGKT) coordinates ATP.

The protein belongs to the RecA family.

It localises to the cytoplasm. Can catalyze the hydrolysis of ATP in the presence of single-stranded DNA, the ATP-dependent uptake of single-stranded DNA by duplex DNA, and the ATP-dependent hybridization of homologous single-stranded DNAs. It interacts with LexA causing its activation and leading to its autocatalytic cleavage. The protein is Protein RecA of Legionella pneumophila (strain Lens).